Here is a 363-residue protein sequence, read N- to C-terminus: Dihydroorotate dehydrogenase (quinone) (363 aa).

FMN is bound by residues 62-66 and threonine 86; that span reads AGFDK. Lysine 66 contributes to the substrate binding site. Residue 111–115 coordinates substrate; sequence NRMGF. FMN-binding residues include asparagine 142 and asparagine 175. Asparagine 175 lines the substrate pocket. Residue serine 178 is the Nucleophile of the active site. Residue asparagine 180 participates in substrate binding. FMN is bound by residues lysine 216 and threonine 244. 245–246 contributes to the substrate binding site; that stretch reads NT. FMN contacts are provided by residues glycine 267, glycine 296, and 317 to 318; that span reads YT.

It belongs to the dihydroorotate dehydrogenase family. Type 2 subfamily. In terms of assembly, monomer. FMN is required as a cofactor.

It is found in the cell membrane. It carries out the reaction (S)-dihydroorotate + a quinone = orotate + a quinol. Its pathway is pyrimidine metabolism; UMP biosynthesis via de novo pathway; orotate from (S)-dihydroorotate (quinone route): step 1/1. Functionally, catalyzes the conversion of dihydroorotate to orotate with quinone as electron acceptor. In Anaeromyxobacter sp. (strain Fw109-5), this protein is Dihydroorotate dehydrogenase (quinone).